Reading from the N-terminus, the 424-residue chain is Dihydroorotase (424 aa).

His61 and His63 together coordinate Zn(2+). Residues 63-65 (HLR) and Asn95 each bind substrate. Asp153, His180, and His233 together coordinate Zn(2+). Substrate is bound at residue Asn279. Asp306 is a binding site for Zn(2+). Asp306 is an active-site residue. His310 is a binding site for substrate.

The protein belongs to the metallo-dependent hydrolases superfamily. DHOase family. Class I DHOase subfamily. Zn(2+) is required as a cofactor.

It carries out the reaction (S)-dihydroorotate + H2O = N-carbamoyl-L-aspartate + H(+). It functions in the pathway pyrimidine metabolism; UMP biosynthesis via de novo pathway; (S)-dihydroorotate from bicarbonate: step 3/3. Catalyzes the reversible cyclization of carbamoyl aspartate to dihydroorotate. This Citrifermentans bemidjiense (strain ATCC BAA-1014 / DSM 16622 / JCM 12645 / Bem) (Geobacter bemidjiensis) protein is Dihydroorotase.